Here is a 79-residue protein sequence, read N- to C-terminus: Acyl carrier protein (79 aa).

The region spanning 2 to 77 is the Carrier domain; sequence SDVLERVRKI…DAVKFIQERL (76 aa). S37 is modified (O-(pantetheine 4'-phosphoryl)serine).

Belongs to the acyl carrier protein (ACP) family. In terms of processing, 4'-phosphopantetheine is transferred from CoA to a specific serine of apo-ACP by AcpS. This modification is essential for activity because fatty acids are bound in thioester linkage to the sulfhydryl of the prosthetic group.

It localises to the cytoplasm. The protein operates within lipid metabolism; fatty acid biosynthesis. Carrier of the growing fatty acid chain in fatty acid biosynthesis. This is Acyl carrier protein from Phenylobacterium zucineum (strain HLK1).